The sequence spans 114 residues: Putative neurotoxin 7 (114 aa).

Belongs to the scolopendra neurotoxin 8 family. In terms of processing, contains 3 disulfide bonds. In terms of tissue distribution, expressed by the venom gland.

Its subcellular location is the secreted. This Scolopendra mutilans (Chinese red-headed centipede) protein is Putative neurotoxin 7.